The sequence spans 1244 residues: Superkiller complex protein 2 (1244 aa).

Residues 218 to 249 (LDLSGGDEDEGEAAGGPRGDNASPSPSGTPLV) form a disordered region. Residues Ser-242 and Ser-253 each carry the phosphoserine modification. The Helicase ATP-binding domain occupies 316–472 (ILHLEQHDSV…WIGRLKRRQI (157 aa)). 329–336 (AHTSAGKT) is a binding site for ATP. Residues 420-423 (DEVH) carry the DEVH box motif. One can recognise a Helicase C-terminal domain in the interval 582–752 (GLTSLDLTTS…LTYTMILNLL (171 aa)).

This sequence belongs to the helicase family. SKI2 subfamily. In terms of assembly, component of the SKI complex which consists of SKIC2, SKIC3 and SKIC8. Interacts with HBS1L isoform 2.

It is found in the nucleus. The protein resides in the cytoplasm. The catalysed reaction is ATP + H2O = ADP + phosphate + H(+). Helicase component of the SKI complex, a multiprotein complex that assists the RNA-degrading exosome during the mRNA decay and quality-control pathways. The SKI complex catalyzes mRNA extraction from 80S ribosomal complexes in the 3'-5' direction and channels mRNA to the cytosolic exosome for degradation. SKI-mediated extraction of mRNA from stalled ribosomes allow binding of the Pelota-HBS1L complex and subsequent ribosome disassembly by ABCE1 for ribosome recycling. In the nucleus, the SKI complex associates with transcriptionally active genes in a manner dependent on PAF1 complex (PAF1C). The protein is Superkiller complex protein 2 of Mus musculus (Mouse).